A 60-amino-acid chain; its full sequence is U1-theraphotoxin-Agm3a (60 aa).

The N-terminal stretch at M1–A21 is a signal peptide. A propeptide spanning residues T22 to R29 is cleaved from the precursor. 3 disulfide bridges follow: C31–C45, C38–C50, and C44–C57.

This sequence belongs to the neurotoxin 10 (Hwtx-1) family. 63 (VsTx1) subfamily. As to expression, expressed by the venom gland.

The protein localises to the secreted. In terms of biological role, inhibits sodium channels Nav1.7/SCN9A and potassium channels Kv11.1/KCNH2. Also binds the voltage-sensor domain of the potassium channel KvAP (from the archaeon Aeropyrum pernix) with very slow apparent binding kinetics and affects channel gating. Reaches its target by dynamically partitioning into anionic or zwitterionic headgroup lipid membranes. May bind to the open state of KvAP. This Acanthoscurria gomesiana (Tarantula spider) protein is U1-theraphotoxin-Agm3a.